A 186-amino-acid polypeptide reads, in one-letter code: PRA1 family protein G2 (186 aa).

4 helical membrane-spanning segments follow: residues 66–86, 87–107, 119–139, and 142–162; these read YFFV…LITA, SPVA…FHFF, VGDR…IWFT, and AVNL…HAVF.

It belongs to the PRA1 family. Expressed in roots and trichomes.

It localises to the endoplasmic reticulum membrane. Its function is as follows. May be involved in both secretory and endocytic intracellular trafficking in the endosomal/prevacuolar compartments. This is PRA1 family protein G2 (PRA1G2) from Arabidopsis thaliana (Mouse-ear cress).